The primary structure comprises 187 residues: Threonylcarbamoyl-AMP synthase (187 aa).

The 184-residue stretch at 4 to 187 (TLTLSEAVTA…DARSGHILRL (184 aa)) folds into the YrdC-like domain.

This sequence belongs to the SUA5 family. TsaC subfamily.

The protein resides in the cytoplasm. It carries out the reaction L-threonine + hydrogencarbonate + ATP = L-threonylcarbamoyladenylate + diphosphate + H2O. In terms of biological role, required for the formation of a threonylcarbamoyl group on adenosine at position 37 (t(6)A37) in tRNAs that read codons beginning with adenine. Catalyzes the conversion of L-threonine, HCO(3)(-)/CO(2) and ATP to give threonylcarbamoyl-AMP (TC-AMP) as the acyladenylate intermediate, with the release of diphosphate. This Xylella fastidiosa (strain M12) protein is Threonylcarbamoyl-AMP synthase.